Consider the following 1047-residue polypeptide: FACT complex subunit SPT16 (1047 aa).

Alanine 2 carries the N-acetylalanine modification. Lysine 139 is subject to N6-acetyllysine. Serine 188 is subject to Phosphoserine. N6-acetyllysine is present on residues lysine 196 and lysine 223. The stretch at 432-507 (LKNEDEEEEE…GEQQIQKARK (76 aa)) forms a coiled coil. Residue serine 455 is modified to Phosphoserine. Positions 492–518 (RLTEQKGEQQIQKARKSNVSYKNPSLM) are disordered. Lysine 497 is covalently cross-linked (Glycyl lysine isopeptide (Lys-Gly) (interchain with G-Cter in SUMO2)). Positions 499-514 (EQQIQKARKSNVSYKN) are enriched in polar residues. Phosphoserine is present on serine 508. Lysine 513 is modified (N6-acetyllysine; alternate). Lysine 513 participates in a covalent cross-link: Glycyl lysine isopeptide (Lys-Gly) (interchain with G-Cter in SUMO2); alternate. Lysine 647 participates in a covalent cross-link: Glycyl lysine isopeptide (Lys-Gly) (interchain with G-Cter in SUMO2). Serine 650 and serine 658 each carry phosphoserine. N6-acetyllysine occurs at positions 732 and 786. Position 903 is a phosphothreonine (threonine 903). Lysine 904 bears the N6-acetyllysine mark. The interval 918–1047 (EQGGWSFLEP…SSAPPKKKRK (130 aa)) is disordered. Residues 927–973 (PEGEGSDAEEGDSESEIEDETFNPSEDDYEEEEEDSDEDYSSEAEES) show a composition bias toward acidic residues. Residues serine 979, serine 982, serine 986, and serine 1015 each carry the phosphoserine modification. Residues 985-1005 (ESGKDWDELEEEARKADRESR) show a composition bias toward basic and acidic residues. Residues 1024 to 1039 (VHSSGRGSNRGSRHSS) are compositionally biased toward low complexity.

It belongs to the peptidase M24 family. SPT16 subfamily. As to quaternary structure, interacts with MYOG (via C-terminal region). Component of the FACT complex, a stable heterodimer of SSRP1 and SUPT16H. Also a component of a CK2-SPT16-SSRP1 complex which forms following UV irradiation, composed of SSRP1, SUPT16H, CSNK2A1, CSNK2A2 and CSNK2B. Interacts with NEK9. Binds to histone H2A-H2B. Identified in a centromere complex containing histones H2A, H2B and H4, and at least CENPA, CENPB, CENPC, CENPT, CENPN, HJURP, SUPT16H, SSRP1 and RSF1. Interacts with GTF2E2. (Microbial infection) Interacts with Herpes simplex virus 1 (HHV-1) protein ICP22; this interaction relocalizes the FACT complex to viral genomes in infected cells. In terms of processing, ADP-ribosylated. ADP-ribosylation by PARP1 is induced by genotoxic stress and correlates with dissociation of FACT from chromatin. Ubiquitous.

The protein localises to the nucleus. Its subcellular location is the chromosome. Functionally, component of the FACT complex, a general chromatin factor that acts to reorganize nucleosomes. The FACT complex is involved in multiple processes that require DNA as a template such as mRNA elongation, DNA replication and DNA repair. During transcription elongation the FACT complex acts as a histone chaperone that both destabilizes and restores nucleosomal structure. It facilitates the passage of RNA polymerase II and transcription by promoting the dissociation of one histone H2A-H2B dimer from the nucleosome, then subsequently promotes the reestablishment of the nucleosome following the passage of RNA polymerase II. The FACT complex is probably also involved in phosphorylation of 'Ser-392' of p53/TP53 via its association with CK2 (casein kinase II). This Homo sapiens (Human) protein is FACT complex subunit SPT16 (SUPT16H).